The sequence spans 283 residues: Isochorismatase domain-containing protein 1 (283 aa).

Belongs to the isochorismatase family.

This Danio rerio (Zebrafish) protein is Isochorismatase domain-containing protein 1 (isoc1).